Consider the following 494-residue polypeptide: Cytochrome P450 2A8 (494 aa).

Cys-439 provides a ligand contact to heme.

Belongs to the cytochrome P450 family. It depends on heme as a cofactor. In terms of tissue distribution, liver.

It localises to the endoplasmic reticulum membrane. Its subcellular location is the microsome membrane. The enzyme catalyses an organic molecule + reduced [NADPH--hemoprotein reductase] + O2 = an alcohol + oxidized [NADPH--hemoprotein reductase] + H2O + H(+). Functionally, highly active in 7-ethoxycoumarin O-deethylation, and benzphetamine N-demethylation; moderately active in testosterone 7-alpha-hydroxylation, ethylmorphine N-demethylation, p-nitroanisole O-demethylation; and only slightly active in benzopyrene 3-hydroxylation, 7-ethoxyresorufin O-deethylation, testosterone 2-alpha-hydroxylation and testosterone 17-oxidation. Competent in the metabolic activation of aflatoxin B1. This chain is Cytochrome P450 2A8 (CYP2A8), found in Mesocricetus auratus (Golden hamster).